Reading from the N-terminus, the 334-residue chain is MATIKDVAKMAGVSTTTVSHVINKTRHVADETKQTVLDAIKALNYSPSAVARSLKVNTTKSIGMVVTTSETPYFAEIIHAVEEQCYRQGYSLFLCNTQNDPDKLKNHLEMLAKKRVDGVLVMCSEYKDDSRDLLKSFSYLPIVIMDWGPVNPDTDLILDNSFEGGYLAGKHLVDNGHKKIGYLSAELTKVTAKQRYQGFIKALSEANVEMKSEWLFEGSFEPEDGYECMNRLLALEDRPTAVFCCNDIMALGAISAITEKGYRVPDDFSVIGYDNVHSSRFFAPPLTTIHQSKARLGERALRLLFERIAHKDAKRETIEIHPELVIRKSVKKIA.

The region spanning 2 to 56 (ATIKDVAKMAGVSTTTVSHVINKTRHVADETKQTVLDAIKALNYSPSAVARSLKV) is the HTH lacI-type domain. The segment at residues 4-23 (IKDVAKMAGVSTTTVSHVIN) is a DNA-binding region (H-T-H motif). The DNA-binding element occupies 48–56 (SAVARSLKV). Hypoxanthine contacts are provided by Y73, K189, T191, F220, and D274.

As to quaternary structure, homodimer.

The protein operates within purine metabolism; purine nucleotide biosynthesis [regulation]. Is the main repressor of the genes involved in the de novo synthesis of purine nucleotides, regulating purB, purC, purEK, purF, purHD, purL, purMN and guaBA expression. PurR is allosterically activated to bind its cognate DNA by binding the purine corepressors, hypoxanthine or guanine, thereby effecting transcription repression. The protein is HTH-type transcriptional repressor PurR of Mannheimia succiniciproducens (strain KCTC 0769BP / MBEL55E).